The following is a 178-amino-acid chain: Cysteine-rich venom protein VAR3 (178 aa).

Positions 1 to 22 (MILLKLYLTLAAILCQSRGTTS) are cleaved as a signal peptide. The region spanning 41–169 (NKHNDLRRTV…PLKYFLVCQY (129 aa)) is the SCP domain. Cystine bridges form between cysteine 77/cysteine 156, cysteine 95/cysteine 170, and cysteine 151/cysteine 167.

The protein belongs to the CRISP family. In terms of processing, contains 8 disulfide bonds. In terms of tissue distribution, expressed by the venom gland.

It localises to the secreted. Blocks ryanodine receptors, and potassium channels. This is Cysteine-rich venom protein VAR3 from Varanus acanthurus (Ridge-tailed monitor).